Consider the following 406-residue polypeptide: Na(+)/H(+) antiporter NhaA (406 aa).

12 helical membrane passes run 29–49, 75–95, 111–131, 141–161, 170–190, 195–215, 220–240, 242–262, 278–298, 306–326, 349–369, and 382–402; these read FAGI…NNIF, FIEL…GLEM, ILPA…YMFF, GWAI…SFFS, AFII…LALF, INTP…ILNY, QLFY…ESGI, GTLC…GEFN, YFIL…YFAF, ILAL…LGIM, FYSI…IGSI, and AAVI…LKYC.

The protein belongs to the NhaA Na(+)/H(+) (TC 2.A.33) antiporter family.

The protein localises to the cell inner membrane. It carries out the reaction Na(+)(in) + 2 H(+)(out) = Na(+)(out) + 2 H(+)(in). Its function is as follows. Na(+)/H(+) antiporter that extrudes sodium in exchange for external protons. The sequence is that of Na(+)/H(+) antiporter NhaA from Rickettsia massiliae (strain Mtu5).